The chain runs to 125 residues: uncharacterized protein (125 aa).

This is an uncharacterized protein from Methanocaldococcus jannaschii (strain ATCC 43067 / DSM 2661 / JAL-1 / JCM 10045 / NBRC 100440) (Methanococcus jannaschii).